The primary structure comprises 344 residues: Succinylglutamate desuccinylase (344 aa).

Zn(2+) contacts are provided by His-63, Glu-66, and His-160. Glu-224 is an active-site residue.

This sequence belongs to the AspA/AstE family. Succinylglutamate desuccinylase subfamily. Zn(2+) is required as a cofactor.

The enzyme catalyses N-succinyl-L-glutamate + H2O = L-glutamate + succinate. Its pathway is amino-acid degradation; L-arginine degradation via AST pathway; L-glutamate and succinate from L-arginine: step 5/5. In terms of biological role, transforms N(2)-succinylglutamate into succinate and glutamate. This Shewanella sp. (strain W3-18-1) protein is Succinylglutamate desuccinylase.